We begin with the raw amino-acid sequence, 258 residues long: Ribosomal RNA small subunit methyltransferase J (258 aa).

Residues arginine 107–aspartate 108, glutamate 123–arginine 124, and aspartate 177 each bind S-adenosyl-L-methionine.

The protein belongs to the methyltransferase superfamily. RsmJ family.

It localises to the cytoplasm. The catalysed reaction is guanosine(1516) in 16S rRNA + S-adenosyl-L-methionine = N(2)-methylguanosine(1516) in 16S rRNA + S-adenosyl-L-homocysteine + H(+). In terms of biological role, specifically methylates the guanosine in position 1516 of 16S rRNA. The polypeptide is Ribosomal RNA small subunit methyltransferase J (Stutzerimonas stutzeri (strain A1501) (Pseudomonas stutzeri)).